The chain runs to 7094 residues: Replicase polyprotein 1ab (7094 aa).

Positions 54–196 constitute a CoV Nsp1 globular domain; that stretch reads PENHVMVDCR…PWVMYLRKCG (143 aa). The 31-residue stretch at 216–246 folds into the BetaCoV Nsp1 C-terminal domain; it reads FKVEDAYDLVHDEPKGKFSKKAYALIRGYRG. Residues 250-519 enclose the CoV Nsp2 N-terminal domain; the sequence is LLYVDQYGCD…LICKALYLDY (270 aa). The Zn(2+) site is built by Cys392, Cys397, Cys413, and Cys416. Positions 392-416 are C4; the sequence is CEQDLCDFKGWVPGNMIDGFACTTC. Residues 524–713 enclose the CoV Nsp2 middle domain; that stretch reads CGNLHQRELL…AQAFRSVAKV (190 aa). One can recognise a CoV Nsp2 C-terminal domain in the interval 733-851; it reads RRRICLSGSK…LDQAWRVPCA (119 aa). A Ubiquitin-like 1 domain is found at 853 to 966; sequence RRVTFKEQPT…LYCAFTAPED (114 aa). The Peptidase C16 1 domain maps to 1036–1274; sequence DLESVIQDYE…IAQLYGSCIT (239 aa). The active-site For PL1-PRO activity is the Cys1074. Residues Cys1151, Cys1154, Cys1177, and Cys1179 each coordinate Zn(2+). The segment at 1151 to 1179 adopts a C4-type 1 zinc-finger fold; that stretch reads CIKCDLALKLKGLDAMFFYGDVVSHVCKC. Catalysis depends on for PL1-PRO activity residues His1225 and Asp1236. One can recognise a Macro domain in the interval 1275–1435; it reads PNVCFVKGDI…LISKCQITAV (161 aa). One can recognise a DPUP domain in the interval 1491 to 1563; that stretch reads DDARTFVQSN…VAQIKALFLD (73 aa). The 56-residue stretch at 1562-1617 folds into the Ubiquitin-like 2 domain; the sequence is LDKVDILLTVDGVNFTNRFVPVGESFGKSLGNVFCDGVNVTKHKCDINYKGKVFFQ. Positions 1631 to 1892 constitute a Peptidase C16 2 domain; sequence SSFNFDQKEL…KIEYNPDLSQ (262 aa). The For PL2-PRO activity role is filled by Cys1671. Residues Cys1749, Cys1751, Cys1783, and Cys1785 each coordinate Zn(2+). The segment at 1749 to 1785 adopts a C4-type 2 zinc-finger fold; sequence CKCGVKQEQRTGVDAVMHFGTLSREDLEIGYTVDCSC. Active-site for PL2-PRO activity residues include His1828 and Asp1842. The Nucleic acid-binding domain maps to 1906 to 2007; sequence IKAQFKTFEK…TYFNRPLLVD (102 aa). A G2M domain is found at 2020-2169; it reads DDGGDISESD…ADNKVIYTTE (150 aa). The next 3 membrane-spanning stretches (helical) occupy residues 2138–2158, 2199–2219, and 2227–2247; these read ISAC…WIKI, ACII…NVIF, and IGFL…TFSL. Positions 2138–2385 are HD1; sequence ISACFNFIKW…ASFIKLFILF (248 aa). In terms of domain architecture, 3Ecto spans 2235-2296; sequence GKIAQWIKST…AIDVVQYEAD (62 aa). 2 disulfide bridges follow: Cys2251/Cys2275 and Cys2266/Cys2272. 3 helical membrane-spanning segments follow: residues 2313 to 2333, 2343 to 2363, and 2365 to 2385; these read LIVS…LISI, LFML…ANML, and AHVF…FILF. Positions 2383–2473 are Y1; sequence ILFRHVAYGC…ELKRPIQPTD (91 aa). The 368-residue stretch at 2383–2750 folds into the CoV Nsp3 Y domain; sequence ILFRHVAYGC…LTTPFSLKGG (368 aa). Zn(2+) contacts are provided by His2387, Cys2392, Cys2397, Cys2400, Cys2433, His2436, Cys2440, and Cys2443. The tract at residues 2387–2400 is ZF1; sequence HVAYGCSKPGCLFC. The segment at 2433-2443 is ZF2; the sequence is CSKHQWNCIDC. A Y2 region spans residues 2474 to 2566; sequence VAYHTVTDVK…MVDKNLITTA (93 aa). Positions 2474–2750 are coV-Y; the sequence is VAYHTVTDVK…LTTPFSLKGG (277 aa). Residues 2567-2649 form a Y3 region; it reads NTGTSVTETM…DSVMSAVSAG (83 aa). Positions 2650-2750 are Y4; the sequence is LELTDESCNN…LTTPFSLKGG (101 aa). 7 helical membrane-spanning segments follow: residues 2752–2772, 2824–2844, 3009–3029, 3031–3051, 3063–3083, 3090–3110, and 3115–3135; these read VFSY…IGLW, STFG…VAVV, VFDL…FLAL, ASSI…YYLI, IVFV…VFQV, VYAI…SVIM, and LVMY…SVVV. Residues 2752–3135 are HD2; sequence VFSYFVYVCF…FCLLYISVVV (384 aa). A Nsp4C domain is found at 3149–3246; it reads LGTSVRSDGT…TASVSTSFLQ (98 aa). Residues 3247–3549 form the Peptidase C30 domain; that stretch reads SGIVKMVNPT…YQQLAGIKLQ (303 aa). Residues His3287 and Cys3391 each act as for 3CL-PRO activity in the active site. A run of 7 helical transmembrane segments spans residues 3558–3578, 3588–3608, 3614–3634, 3657–3677, 3684–3704, 3711–3731, and 3755–3775; these read GIVC…TAFV, TNML…MLLV, YLTM…YLVV, TYTD…FVTL, LFSF…WYMG, ILLM…LSMA, and IVLV…GLFS. The segment at 3558–3775 is HD3; the sequence is GIVCWIMAST…IISCYWGLFS (218 aa). Residues 3837 to 3925 enclose the RdRp Nsp7 cofactor domain; sequence SKLTDVKCAN…DYAKDNTVLQ (89 aa). One can recognise a RdRp Nsp8 cofactor domain in the interval 3926-4122; that stretch reads ALQSEFVNMA…HNEVSATVLQ (197 aa). In terms of domain architecture, Nsp9 ssRNA-binding spans 4123 to 4232; sequence NNELMPAKLK…GTISSTVRLQ (110 aa). The region spanning 4233-4370 is the ExoN/MTase coactivator domain; it reads AGTATEYASN…CVSTDTTVQS (138 aa). Zn(2+)-binding residues include Cys4306, Cys4309, His4315, Cys4322, Cys4348, Cys4351, Cys4359, and Cys4361. Zinc fingers lie at residues 4306–4322 and 4348–4361; these read CIYC…DGLC and CQVC…SCSC. The 256-residue stretch at 4375–4630 folds into the NiRAN domain; that stretch reads FLNRVRGTSV…DCELYVNNAY (256 aa). The Mn(2+) site is built by Asn4578 and Asp4587. The 99-residue stretch at 4631 to 4729 folds into the Nsp12 Interface domain; that stretch reads RLFDLVQYDF…MNMDVDTHRY (99 aa). His4660, Cys4666, Cys4671, Cys4675, and Cys4852 together coordinate Zn(2+). One can recognise a Nsp12 RNA-dependent RNA polymerase domain in the interval 4730–5297; it reads RLSLKDLLLY…NMYLRSAVMQ (568 aa). Positions 4732–4946 are rdRp Fingers N-ter; the sequence is SLKDLLLYAA…HQKCLKSIAA (215 aa). A rdRp Palm N-ter region spans residues 4947 to 4985; sequence TRGVPVVIGTTKFYGGWDDMLRRLIKDVDNPVLMGWDYP. A RdRp catalytic domain is found at 4977–5139; it reads PVLMGWDYPK…CYNSDYASKG (163 aa). The rdRp Fingers C-ter stretch occupies residues 4986–5044; sequence KCDRAMPNILRIVSSLVLARKHEACCSQSDRFYRLANECAQVLSEIVMCGGCYYVKPGG. The Zn(2+) site is built by His5007, Cys5010, and Cys5011. A rdRp Palm C-ter region spans residues 5045 to 5180; that stretch reads TSSGDATTAF…NNGPHEFCSQ (136 aa). Active-site residues include Ser5124, Asp5125, and Asp5126. A rdRp Thumb region spans residues 5181–5297; it reads HTMLVKMDGD…NMYLRSAVMQ (117 aa). One can recognise a CV ZBD domain in the interval 5298–5410; the sequence is SVGACVVCSS…DDFNRIASCK (113 aa). 12 residues coordinate Zn(2+): Cys5302, Cys5305, Cys5313, Cys5316, Cys5323, Cys5326, His5330, His5336, Cys5347, Cys5352, Cys5369, and His5372. A (+)RNA virus helicase ATP-binding domain is found at 5553–5734; it reads SVLETFQNNV…MCCLGPDIFL (182 aa). Residue 5578 to 5585 coordinates ATP; sequence GPPGTGKS. A (+)RNA virus helicase C-terminal domain is found at 5735–5904; the sequence is GTCYRCPKEI…VETRVQCSTN (170 aa). Positions 5971 to 6186 constitute an ExoN domain; it reads LFITKEEAVK…RCLAVYDCFC (216 aa). Catalysis depends on residues Asp5989, Glu5991, and Glu6090. Residues Cys6106, Cys6109, Cys6125, His6128, His6156, Cys6160, and His6163 each coordinate Zn(2+). Residues His6167 and Asp6172 contribute to the active site. Position 6178 (Cys6178) interacts with Zn(2+). The 227-residue stretch at 6195–6421 folds into the N7-MTase domain; the sequence is YPIISNELSI…NLWNTFTKLQ (227 aa). Position 6230–6236 (6230–6236) interacts with S-adenosyl-L-methionine; that stretch reads DIGNPKA. The segment at 6308-6322 is gpppA-binding; it reads CNGGSLYVNKHAFHT. Residues Cys6346, Cys6367, Cys6378, and His6381 each contribute to the Zn(2+) site. In terms of domain architecture, Nsp15 N-terminal oligomerization spans 6422-6482; that stretch reads SLENVVYNLV…NVAVELFAKR (61 aa). The 121-residue stretch at 6483 to 6603 folds into the AV-Nsp11N/CoV-Nsp15M domain; it reads SIRHHPELKL…FAVRKEGQDV (121 aa). One can recognise a NendoU domain in the interval 6653-6792; sequence TCRTDMEKDF…NDEKVMTFYP (140 aa). Active-site residues include His6683, His6698, Lys6738, Lys6841, Asp6925, Lys6965, and Glu6998. The Nidovirus-type SAM-dependent 2'-O-MTase domain occupies 6797–7091; that stretch reads ASDWKPGYSM…KEVFVGDSLV (295 aa).

This sequence belongs to the coronaviruses polyprotein 1ab family. Interacts with host PHB and PHB2. As to quaternary structure, interacts with papain-like protease nsp3 and non-structural protein 6. In terms of assembly, monomer. Homodimer. Only the homodimer shows catalytic activity. Interacts with nsp8 and nsp12 to form the replication-transcription complex (RTC): nsp12, nsp7, two subunits of nsp8, and up to two subunits of nsp13. As to quaternary structure, interacts with nsp7, nsp13 and nsp12 to form the replication-transcription complex (RTC): nsp12, nsp7, two subunits of nsp8, and up to two subunits of nsp13. In terms of assembly, interacts with nsp12. Interacts with proofreading exoribonuclease nsp14 and 2'-O-methyltransferase nsp16; these interactions enhance nsp14 and nsp16 enzymatic activities. As to quaternary structure, interacts with nsp7 and nsp8 to form the replication-transcription complex (RTC): nsp12, nsp7, two subunits of nsp8, and up to two subunits of nsp13. Interacts with nsp9. In terms of assembly, interacts with nsp8 to form the replication-transcription complex (RTC): nsp12, nsp7, two subunits of nsp8, and up to two subunits of nsp13. It depends on Mn(2+) as a cofactor. Mg(2+) is required as a cofactor. Post-translationally, specific enzymatic cleavages in vivo by its own proteases yield mature proteins. 3CL-PRO and PL-PRO proteinases are autocatalytically processed.

The protein localises to the host membrane. It localises to the host cytoplasm. The protein resides in the host perinuclear region. Its subcellular location is the host endoplasmic reticulum-Golgi intermediate compartment. The catalysed reaction is RNA(n) + a ribonucleoside 5'-triphosphate = RNA(n+1) + diphosphate. The enzyme catalyses ATP + H2O = ADP + phosphate + H(+). It catalyses the reaction Thiol-dependent hydrolysis of ester, thioester, amide, peptide and isopeptide bonds formed by the C-terminal Gly of ubiquitin (a 76-residue protein attached to proteins as an intracellular targeting signal).. It carries out the reaction a 5'-end (N(7)-methyl 5'-triphosphoguanosine)-ribonucleoside in mRNA + S-adenosyl-L-methionine = a 5'-end (N(7)-methyl 5'-triphosphoguanosine)-(2'-O-methyl-ribonucleoside) in mRNA + S-adenosyl-L-homocysteine + H(+). The catalysed reaction is uridylyl-uridylyl-ribonucleotide-RNA = a 3'-end uridylyl-2',3'-cyclophospho-uridine-RNA + a 5'-end dephospho-ribonucleoside-RNA. The enzyme catalyses a 5'-end diphospho-ribonucleoside in mRNA + GTP + H(+) = a 5'-end (5'-triphosphoguanosine)-ribonucleoside in mRNA + diphosphate. It catalyses the reaction a 5'-end (5'-triphosphoguanosine)-ribonucleoside in mRNA + S-adenosyl-L-methionine = a 5'-end (N(7)-methyl 5'-triphosphoguanosine)-ribonucleoside in mRNA + S-adenosyl-L-homocysteine. Functionally, the replicase polyprotein of coronaviruses is a multifunctional protein: it contains the activities necessary for the transcription of negative stranded RNA, leader RNA, subgenomic mRNAs and progeny virion RNA as well as proteinases responsible for the cleavage of the polyprotein into functional products. Its function is as follows. Inhibits host translation by interacting with the 40S ribosomal subunit. The nsp1-40S ribosome complex further induces an endonucleolytic cleavage near the 5'UTR of host mRNAs, targeting them for degradation. Viral mRNAs are not susceptible to nsp1-mediated endonucleolytic RNA cleavage thanks to the presence of a 5'-end leader sequence and are therefore protected from degradation. By suppressing host gene expression, nsp1 facilitates efficient viral gene expression in infected cells and evasion from host immune response. In terms of biological role, may play a role in the modulation of host cell survival signaling pathway by interacting with host PHB and PHB2. Indeed, these two proteins play a role in maintaining the functional integrity of the mitochondria and protecting cells from various stresses. Responsible for the cleavages located at the N-terminus of the replicase polyprotein. In addition, PL-PRO possesses a deubiquitinating/deISGylating activity and processes both 'Lys-48'- and 'Lys-63'-linked polyubiquitin chains from cellular substrates. Participates together with nsp4 in the assembly of virally-induced cytoplasmic double-membrane vesicles necessary for viral replication. Antagonizes innate immune induction of type I interferon by blocking the phosphorylation, dimerization and subsequent nuclear translocation of host IRF3. Also prevents host NF-kappa-B signaling. Functionally, participates in the assembly of virally-induced cytoplasmic double-membrane vesicles necessary for viral replication. Its function is as follows. Cleaves the C-terminus of replicase polyprotein at 11 sites. Recognizes substrates containing the core sequence [ILMVF]-Q-|-[SGACN]. Also able to bind an ADP-ribose-1''-phosphate (ADRP). In terms of biological role, plays a role in the initial induction of autophagosomes from host endoplasmic reticulum. Later, limits the expansion of these phagosomes that are no longer able to deliver viral components to lysosomes. Forms a hexadecamer with nsp8 (8 subunits of each) that may participate in viral replication by acting as a primase. Alternatively, may synthesize substantially longer products than oligonucleotide primers. Functionally, forms a hexadecamer with nsp7 (8 subunits of each) that may participate in viral replication by acting as a primase. Alternatively, may synthesize substantially longer products than oligonucleotide primers. Its function is as follows. Forms a primer, NSP9-pU, which is utilized by the polymerase for the initiation of RNA chains. Interacts with ribosome signal recognition particle RNA (SRP). Together with NSP8, suppress protein integration into the cell membrane, thereby disrupting host immune defenses. In terms of biological role, plays a pivotal role in viral transcription by stimulating both nsp14 3'-5' exoribonuclease and nsp16 2'-O-methyltransferase activities. Therefore plays an essential role in viral mRNAs cap methylation. RNA-directed RNA polymerase that catalyzes the transcription of viral genomic and subgenomic RNAs. Acts in complex with nsp7 and nsp8 to transcribe both the minus and positive strands of genomic RNA. The kinase-like NiRAN domain of NSP12 attaches one or more nucleotides to the amino terminus of NSP9, forming a covalent RNA-protein intermediate that serves as transcription/replication primer. Subgenomic RNAs (sgRNAs) are formed by discontinuous transcription: The polymerase has the ability to pause at transcription-regulating sequences (TRS) and jump to the leader TRS, resulting in a major deletion. This creates a series of subgenomic RNAs that are replicated, transcribed and translated. In addition, Nsp12 is a subunit of the viral RNA capping enzyme that catalyzes the RNA guanylyltransferase reaction for genomic and sub-genomic RNAs. Subsequently, the NiRAN domain transfers RNA to GDP, and forms the core cap structure GpppA-RNA. Functionally, multi-functional protein with a zinc-binding domain in N-terminus displaying RNA and DNA duplex-unwinding activities with 5' to 3' polarity. Activity of helicase is dependent on magnesium. Its function is as follows. Plays a role in viral RNA synthesis through two distinct activities. The N7-guanine methyltransferase activity plays a role in the formation of the cap structure GpppA-RNA. The proofreading exoribonuclease reduces the sensitivity of the virus to RNA mutagens during replication. This activity acts on both ssRNA and dsRNA in a 3'-5' direction. In terms of biological role, plays a role in viral transcription/replication and prevents the simultaneous activation of host cell dsRNA sensors, such as MDA5/IFIH1, OAS, and PKR. Acts by degrading the 5'-polyuridines generated during replication of the poly(A) region of viral genomic and subgenomic RNAs. Catalyzes a two-step reaction in which a 2'3'-cyclic phosphate (2'3'-cP) is first generated by 2'-O transesterification, which is then hydrolyzed to a 3'-phosphate (3'-P). If not degraded, poly(U) RNA would hybridize with poly(A) RNA tails and activate host dsRNA sensors. Methyltransferase that mediates mRNA cap 2'-O-ribose methylation to the 5'-cap structure of viral mRNAs. N7-methyl guanosine cap is a prerequisite for binding of nsp16. Therefore plays an essential role in viral mRNAs cap methylation which is essential to evade immune system. In Bos taurus (Bovine), this protein is Replicase polyprotein 1ab (rep).